Reading from the N-terminus, the 294-residue chain is 4-hydroxy-tetrahydrodipicolinate synthase (294 aa).

Thr45 is a binding site for pyruvate. Residue Tyr133 is the Proton donor/acceptor of the active site. Lys161 functions as the Schiff-base intermediate with substrate in the catalytic mechanism. Ile203 serves as a coordination point for pyruvate.

Belongs to the DapA family. Homotetramer; dimer of dimers.

It is found in the cytoplasm. The catalysed reaction is L-aspartate 4-semialdehyde + pyruvate = (2S,4S)-4-hydroxy-2,3,4,5-tetrahydrodipicolinate + H2O + H(+). It participates in amino-acid biosynthesis; L-lysine biosynthesis via DAP pathway; (S)-tetrahydrodipicolinate from L-aspartate: step 3/4. In terms of biological role, catalyzes the condensation of (S)-aspartate-beta-semialdehyde [(S)-ASA] and pyruvate to 4-hydroxy-tetrahydrodipicolinate (HTPA). The protein is 4-hydroxy-tetrahydrodipicolinate synthase of Thioalkalivibrio sulfidiphilus (strain HL-EbGR7).